The sequence spans 137 residues: Small ribosomal subunit protein uS12 (137 aa).

The protein belongs to the universal ribosomal protein uS12 family. In terms of assembly, part of the 30S ribosomal subunit. Contacts proteins S8 and S17. May interact with IF1 in the 30S initiation complex.

Functionally, with S4 and S5 plays an important role in translational accuracy. Its function is as follows. Interacts with and stabilizes bases of the 16S rRNA that are involved in tRNA selection in the A site and with the mRNA backbone. Located at the interface of the 30S and 50S subunits, it traverses the body of the 30S subunit contacting proteins on the other side and probably holding the rRNA structure together. The combined cluster of proteins S8, S12 and S17 appears to hold together the shoulder and platform of the 30S subunit. This Lactiplantibacillus plantarum (strain ATCC BAA-793 / NCIMB 8826 / WCFS1) (Lactobacillus plantarum) protein is Small ribosomal subunit protein uS12.